Reading from the N-terminus, the 488-residue chain is Proline--tRNA ligase (488 aa).

This sequence belongs to the class-II aminoacyl-tRNA synthetase family. ProS type 3 subfamily. In terms of assembly, homodimer.

The protein localises to the cytoplasm. The catalysed reaction is tRNA(Pro) + L-proline + ATP = L-prolyl-tRNA(Pro) + AMP + diphosphate. Catalyzes the attachment of proline to tRNA(Pro) in a two-step reaction: proline is first activated by ATP to form Pro-AMP and then transferred to the acceptor end of tRNA(Pro). The sequence is that of Proline--tRNA ligase from Pyrobaculum aerophilum (strain ATCC 51768 / DSM 7523 / JCM 9630 / CIP 104966 / NBRC 100827 / IM2).